Consider the following 66-residue polypeptide: Sarcoplasmic/endoplasmic reticulum calcium ATPase regulator ARLN (66 aa).

N-acetylmethionine is present on methionine 1. Positions 1 to 37 are disordered; sequence MEVDAPGVDGRDGLRERRGFSEGGRQNFDVRPQSGAN. A compositionally biased stretch (basic and acidic residues) spans 9-20; it reads DGRDGLRERRGF. Residues 45-65 traverse the membrane as a helical segment; the sequence is WLDLWLFILFDVVVFLFVYFL.

In terms of assembly, homooligomer. Can also form heterooligomers with other sarcoplasmic/endoplasmic reticulum calcium ATPase (SERCA) regulators ERLN, PLN, SLN and STRIT1/DWORF. Monomer. Interacts as a monomer with ATP2A2/SERCA2; the interaction results in inhibition of ATP2A2 Ca(2+) affinity.

It is found in the endoplasmic reticulum membrane. Its function is as follows. Inhibits the activity of the calcium ATPases ATP2A2/SERCA2 and ATP2A3/SERCA3 by decreasing their apparent affinity for Ca(2+). The sequence is that of Sarcoplasmic/endoplasmic reticulum calcium ATPase regulator ARLN from Homo sapiens (Human).